Consider the following 559-residue polypeptide: Oxygen-dependent choline dehydrogenase (559 aa).

Position 4–33 (4–33) interacts with FAD; it reads DYIIIGAGSAGNVLATRLTEDSDVTVLLLE. H473 acts as the Proton acceptor in catalysis.

This sequence belongs to the GMC oxidoreductase family. Requires FAD as cofactor.

The catalysed reaction is choline + A = betaine aldehyde + AH2. It catalyses the reaction betaine aldehyde + NAD(+) + H2O = glycine betaine + NADH + 2 H(+). It participates in amine and polyamine biosynthesis; betaine biosynthesis via choline pathway; betaine aldehyde from choline (cytochrome c reductase route): step 1/1. Functionally, involved in the biosynthesis of the osmoprotectant glycine betaine. Catalyzes the oxidation of choline to betaine aldehyde and betaine aldehyde to glycine betaine at the same rate. The chain is Oxygen-dependent choline dehydrogenase from Cronobacter sakazakii (strain ATCC BAA-894) (Enterobacter sakazakii).